Consider the following 689-residue polypeptide: Glycine--tRNA ligase beta subunit (689 aa).

Belongs to the class-II aminoacyl-tRNA synthetase family. Tetramer of two alpha and two beta subunits.

It is found in the cytoplasm. It catalyses the reaction tRNA(Gly) + glycine + ATP = glycyl-tRNA(Gly) + AMP + diphosphate. The protein is Glycine--tRNA ligase beta subunit of Actinobacillus succinogenes (strain ATCC 55618 / DSM 22257 / CCUG 43843 / 130Z).